The sequence spans 226 residues: N-acetylmuramic acid 6-phosphate phosphatase (226 aa).

The Nucleophile role is filled by Asp-12. Residues Asp-12, Asp-14, and Asp-171 each contribute to the Mg(2+) site. The active-site Proton donor is the Asp-14.

Belongs to the HAD-like hydrolase superfamily. CbbY/CbbZ/Gph/YieH family. Phosphatase MupP subfamily. Requires Mg(2+) as cofactor.

The catalysed reaction is N-acetyl-D-muramate 6-phosphate + H2O = N-acetyl-D-muramate + phosphate. It functions in the pathway cell wall biogenesis; peptidoglycan recycling. Its function is as follows. Specifically catalyzes the dephosphorylation of N-acetylmuramate 6-phosphate (MurNAc-6P) to MurNac. Is involved in peptidoglycan recycling as part of a cell wall recycling pathway that bypasses de novo biosynthesis of the peptidoglycan precursor UDP-MurNAc. Plays a role in intrinsic resistance to fosfomycin, which targets the de novo synthesis of UDP-MurNAc. The polypeptide is N-acetylmuramic acid 6-phosphate phosphatase (Pseudomonas aeruginosa (strain ATCC 15692 / DSM 22644 / CIP 104116 / JCM 14847 / LMG 12228 / 1C / PRS 101 / PAO1)).